The chain runs to 296 residues: GTP cyclohydrolase FolE2 (296 aa).

The protein belongs to the GTP cyclohydrolase IV family.

It carries out the reaction GTP + H2O = 7,8-dihydroneopterin 3'-triphosphate + formate + H(+). It participates in cofactor biosynthesis; 7,8-dihydroneopterin triphosphate biosynthesis; 7,8-dihydroneopterin triphosphate from GTP: step 1/1. Functionally, converts GTP to 7,8-dihydroneopterin triphosphate. The polypeptide is GTP cyclohydrolase FolE2 (Ectopseudomonas mendocina (strain ymp) (Pseudomonas mendocina)).